The sequence spans 398 residues: 1-deoxy-D-xylulose 5-phosphate reductoisomerase (398 aa).

NADPH is bound by residues threonine 11, glycine 12, serine 13, isoleucine 14, and asparagine 125. Lysine 126 contacts 1-deoxy-D-xylulose 5-phosphate. Glutamate 127 provides a ligand contact to NADPH. Aspartate 151 is a binding site for Mn(2+). Serine 152, glutamate 153, serine 186, and histidine 209 together coordinate 1-deoxy-D-xylulose 5-phosphate. Glutamate 153 is a binding site for Mn(2+). Glycine 215 is a binding site for NADPH. Positions 222, 227, 228, and 231 each coordinate 1-deoxy-D-xylulose 5-phosphate. Glutamate 231 serves as a coordination point for Mn(2+).

Belongs to the DXR family. Mg(2+) is required as a cofactor. It depends on Mn(2+) as a cofactor.

It carries out the reaction 2-C-methyl-D-erythritol 4-phosphate + NADP(+) = 1-deoxy-D-xylulose 5-phosphate + NADPH + H(+). It participates in isoprenoid biosynthesis; isopentenyl diphosphate biosynthesis via DXP pathway; isopentenyl diphosphate from 1-deoxy-D-xylulose 5-phosphate: step 1/6. In terms of biological role, catalyzes the NADPH-dependent rearrangement and reduction of 1-deoxy-D-xylulose-5-phosphate (DXP) to 2-C-methyl-D-erythritol 4-phosphate (MEP). In Acinetobacter baumannii (strain AB307-0294), this protein is 1-deoxy-D-xylulose 5-phosphate reductoisomerase.